We begin with the raw amino-acid sequence, 147 residues long: Diuretic hormone 45 (147 aa).

A signal peptide spans 1-26; that stretch reads MMWWAVWCAAMVAGSVFTAAAPPTDS. The propeptide occupies 27-84; it reads IDLMQMDPSLADDESLGFAMQSLSGRYAAAPWLYLLADVSHDPQRMAEFSQSSGRARP. Val-131 carries the valine amide modification. Positions 135 to 147 are excised as a propeptide; sequence GAWGEPASYLYNN.

Belongs to the sauvagine/corticotropin-releasing factor/urotensin I family.

It localises to the secreted. Regulation of fluid secretion. This is Diuretic hormone 45 (dh45) from Bombyx mori (Silk moth).